Here is a 470-residue protein sequence, read N- to C-terminus: MVAQRARRRKRASATQLYRTCKASGTCPPDVIPKVEGTTLADRILQWGSLGVYLGGLGIGTGSGTGGRTGYVPISTRPGTVVDVSVPARPPVVIEPVGPSDPSIVNLLEDSSIINSGSTIPTFSGTSGFEVTSSATTTPAVLDITPASENVVISSTNFTNPAFTEPSLVEVPQSGEVSGHILISTPTAGTHGYEEIPMDTFASSGTGTEPISSTPVPGVSRIAGPRLYSRANTQVKVSDPAFLSRPSSLLTFDNPVFEPEDETIIFERPYSPSRVPDPDFLDIVRLHRPALTSRRGTVRFSRLGQKFSMRTRSGKGIGARVHYYQDLSPIAPIEDIEMEPLLAPAASDTIYDIFADVDDGDVAFTEGYRSTTQSRGYNTTSPLSSTLSTKYGNVTIPFVSPVDVTLHTGPDIVLPTSAQWPYVPLSPADTTHYVYIDGGDFYLWPVTFHFSRHRRRKRVSYFFADGTLAL.

Positions 1 to 12 match the Nuclear localization signal motif; sequence MVAQRARRRKRA. Cys21 and Cys27 are joined by a disulfide. Positions 449–459 match the Nuclear localization signal motif; it reads HFSRHRRRKRV.

The protein belongs to the papillomaviridae L2 protein family. Interacts with major capsid protein L1. Interacts with E2; this interaction inhibits E2 transcriptional activity but not the DNA replication function E2. Interacts with host GADD45GIP1. Interacts with host HSPA8; this interaction is required for L2 nuclear translocation. Interacts with host importins KPNB2 and KPNB3. Forms a complex with importin alpha2-beta1 heterodimers via interaction with the importin alpha2 adapter. Interacts with host DYNLT1; this interaction is essential for virus intracellular transport during entry. Interacts (via C-terminus) with host retromer subunits VPS35 and VPS29. Highly phosphorylated.

The protein resides in the virion. The protein localises to the host nucleus. It localises to the host early endosome. Its subcellular location is the host Golgi apparatus. In terms of biological role, minor protein of the capsid that localizes along the inner surface of the virion, within the central cavities beneath the L1 pentamers. Plays a role in capsid stabilization through interaction with the major capsid protein L1. Once the virion enters the host cell, L2 escorts the genomic DNA into the nucleus by promoting escape from the endosomal compartments and traffic through the host Golgi network. Mechanistically, the C-terminus of L2 possesses a cell-penetrating peptide that protudes from the host endosome, interacts with host cytoplasmic retromer cargo and thereby mediates the capsid delivery to the host trans-Golgi network. Plays a role through its interaction with host dynein in the intracellular microtubule-dependent transport of viral capsid toward the nucleus. Mediates the viral genome import into the nucleus through binding to host importins. Once within the nucleus, L2 localizes viral genomes to host PML bodies in order to activate early gene expression for establishment of infection. Later on, promotes late gene expression by interacting with the viral E2 protein and by inhibiting its transcriptional activation functions. During virion assembly, encapsidates the genome by direct interaction with the viral DNA. The sequence is that of Minor capsid protein L2 from Human papillomavirus type 10.